We begin with the raw amino-acid sequence, 126 residues long: UPF0102 protein plu4003 (126 aa).

It belongs to the UPF0102 family.

In Photorhabdus laumondii subsp. laumondii (strain DSM 15139 / CIP 105565 / TT01) (Photorhabdus luminescens subsp. laumondii), this protein is UPF0102 protein plu4003.